The following is a 462-amino-acid chain: MANMLYFSLLALLFMTGIASEGTISSGLASLKAKIDAKRPSGKQLFDKVANMQKQIEEKFSNDDERAKVMGAIGSLSTAVGKFQSGDPAKIASGCLDILVGISSVLKDFAKFSPIFSILSMVVGLFSGTKAEESVGSVVKKVVQEQSDQELQEALYGVKREYAVSKAFLDGVRNETSDLSPTEVSALGANVPVYQGVRFIAMVVQRIKNRKPRTESEIKRVLSMLELFTDLCSLRDLILLDLYQLVATPGHSPNIASGIKEVSNLGREEYKKVFEDLLKTNDKETYLFLSYLYPRERNEQSQKIFKFFDLMKVKYDDRLKQDLTGIQVFSSLHWPNYFLCSSKDYLALICTKPYGSLRLDKLNDGFYSIKTTQSNPKVCHRYGEYILFTHDRNDDLEKFNFVPVKLGERKIYLLSSKASPNKFAYVPKTAKGDLFFVDGIPSQLGYGNQGYFTLATDENEQT.

A signal peptide spans 1-19 (MANMLYFSLLALLFMTGIA). Asparagine 174 carries an N-linked (GlcNAc...) asparagine glycan.

The protein belongs to the jellyfish toxin family. Type I subfamily. Contains disulfide bonds. In terms of processing, N-glycosylated.

The protein localises to the secreted. The protein resides in the nematocyst. It is found in the target cell membrane. Critical allergen and main toxic protein of C.quadrigatus venom. Has potent hemolytic activity. Is lethal to crayfish. Causes cutaneous inflammation in humans. May act as a pore-forming toxin, disrupting normal transmembrane ion concentration gradients in susceptible cells. The chain is Toxin CqTX-A from Chiropsoides quadrigatus (Box jellyfish).